A 227-amino-acid polypeptide reads, in one-letter code: Ribose-5-phosphate isomerase A (227 aa).

Substrate contacts are provided by residues 30–33 (TGST), 86–89 (DGAD), and 99–104 (KGMGGA). Glu108 acts as the Proton acceptor in catalysis. Residue Lys126 coordinates substrate.

The protein belongs to the ribose 5-phosphate isomerase family. In terms of assembly, homodimer.

The enzyme catalyses aldehydo-D-ribose 5-phosphate = D-ribulose 5-phosphate. Its pathway is carbohydrate degradation; pentose phosphate pathway; D-ribose 5-phosphate from D-ribulose 5-phosphate (non-oxidative stage): step 1/1. Its function is as follows. Involved in the first step of the non-oxidative branch of the pentose phosphate pathway. It catalyzes the reversible conversion of ribose-5-phosphate to ribulose 5-phosphate. Can also act on D-ribose-5-diphosphate and D-ribose-5-triphosphate as substrate. The polypeptide is Ribose-5-phosphate isomerase A (Thermus thermophilus (strain ATCC BAA-163 / DSM 7039 / HB27)).